The following is a 241-amino-acid chain: uncharacterized protein (241 aa).

5 consecutive transmembrane segments (helical) span residues 7–27, 37–57, 72–92, 110–130, and 138–158; these read LIFLLFVIVVSYIFNGLWSVF, LFLLIAFHPQHLDGLIILLLI, IIALVGILLTIIKGVIKSGFG, INLVVFSILLTSVYVLGYVAF, and FGTLYTAFGGLALLGAGIKII.

Its subcellular location is the cell membrane. This is an uncharacterized protein from Methanocaldococcus jannaschii (strain ATCC 43067 / DSM 2661 / JAL-1 / JCM 10045 / NBRC 100440) (Methanococcus jannaschii).